The primary structure comprises 326 residues: Olfactory receptor 10X1 (326 aa).

Residues 1 to 41 lie on the Extracellular side of the membrane; it reads MVLNVYCCFFQISDIQTMKINQTILKEFILVGFSVYPHVQT. Asparagine 21 is a glycosylation site (N-linked (GlcNAc...) asparagine). Residues 42-62 traverse the membrane as a helical segment; the sequence is FLFVVFFCLYLLTLAGNLIIM. Over 63 to 70 the chain is Cytoplasmic; it reads GLTWVDRS. Residues 71–91 traverse the membrane as a helical segment; it reads LHTPMYLFLSALSFSETCYTL. Residues 92–115 lie on the Extracellular side of the membrane; sequence TIVPKMLEDLLAKDRSISVTGCSL. Cysteine 113 and cysteine 205 are joined by a disulfide. A helical transmembrane segment spans residues 116 to 136; the sequence is QMCFFLGLGGTNCIILTLMGY. Residues 137–155 lie on the Cytoplasmic side of the membrane; the sequence is DRFLAICNPLRYPLLMTNI. A helical membrane pass occupies residues 156 to 176; that stretch reads VCGQLVASACTAGFFISLTET. Over 177–213 the chain is Extracellular; it reads ALIFRDSFCRPNLVKHFFCHMLAVIRLSCIDSNHTEF. N-linked (GlcNAc...) asparagine glycosylation occurs at asparagine 209. A helical membrane pass occupies residues 214–233; sequence IITLISVSGLLGTLLLIILT. Residues 234-253 are Cytoplasmic-facing; sequence DVFIISTVLRIPSAEGKQKA. The chain crosses the membrane as a helical span at residues 254–274; it reads FTTCASHLTVVIIHFGFASIV. The Extracellular portion of the chain corresponds to 275–284; sequence YLKPEASGDD. Residues 285–305 form a helical membrane-spanning segment; it reads TLIAVPYTVITPFLSPIIFSL. The Cytoplasmic portion of the chain corresponds to 306-326; the sequence is RNKDMKNAFRRMMGNTVALKK.

This sequence belongs to the G-protein coupled receptor 1 family.

It localises to the cell membrane. Odorant receptor. This Homo sapiens (Human) protein is Olfactory receptor 10X1 (OR10X1).